Consider the following 282-residue polypeptide: Ribosomal RNA small subunit methyltransferase A (282 aa).

The interval 1-21 (MPDFPKEHATPMSNRPPAHQA) is disordered. The S-adenosyl-L-methionine site is built by Asn-28, Leu-30, Gly-55, Glu-76, Asp-101, and Asn-126.

It belongs to the class I-like SAM-binding methyltransferase superfamily. rRNA adenine N(6)-methyltransferase family. RsmA subfamily.

The protein resides in the cytoplasm. It catalyses the reaction adenosine(1518)/adenosine(1519) in 16S rRNA + 4 S-adenosyl-L-methionine = N(6)-dimethyladenosine(1518)/N(6)-dimethyladenosine(1519) in 16S rRNA + 4 S-adenosyl-L-homocysteine + 4 H(+). In terms of biological role, specifically dimethylates two adjacent adenosines (A1518 and A1519) in the loop of a conserved hairpin near the 3'-end of 16S rRNA in the 30S particle. May play a critical role in biogenesis of 30S subunits. This Chromohalobacter salexigens (strain ATCC BAA-138 / DSM 3043 / CIP 106854 / NCIMB 13768 / 1H11) protein is Ribosomal RNA small subunit methyltransferase A.